The chain runs to 494 residues: MASRILVNIKEEVTCPICLELLTEPLSLDCGHSFCQACITANHKESTLHQGERSCPLCRMSYPSENLRPNRHLANIVERLKEVMLSPEEGQKVDHCARHGEKLLLFCQQDGNVICWLCERSQEHRGHHTFLVEEVAEKYQGKLQVALEMMRQKQQDAEKLEADVREEQASWKIQIQNDKTNIMAEFKQLRDILDCEESKELQNLEKEEKNILKRLVQSESDMVLQTQSIRVLISDLERRLQGSVMELLQGVDDVIKRIEKVTLQKPKTFLNEKRRVFRAPDLKGMLQAFKELTEVQRYWAHVTLVPSHPSCTVISEDERQVRYQVPIHQPLVKVKYFYGVLGSLSITSGKHYWEVDVSNKRGWILGVCGSWKCNAKWNVLRPENYQPKNGYWVIGLRNTDNYSAFQDAVKYSDVQDGSRSVSSGPLIVPLFMTICPNRVGVFLDYEACTISFFNVTSNGFLIYKFSNCHFSYPVFPYFSPTTCELPMTLCSPSS.

Ala-2 is modified (N-acetylalanine). The RING-type zinc-finger motif lies at 15 to 59; that stretch reads CPICLELLTEPLSLDCGHSFCQACITANHKESTLHQGERSCPLCR. A Phosphoserine modification is found at Ser-86. The segment at 91–132 adopts a B box-type zinc-finger fold; that stretch reads QKVDHCARHGEKLLLFCQQDGNVICWLCERSQEHRGHHTFLV. Zn(2+) is bound by residues Cys-96, His-99, Cys-118, and His-124. The stretch at 132-223 forms a coiled coil; it reads VEEVAEKYQG…RLVQSESDMV (92 aa). Positions 186 to 199 are required for interaction with GABARAP and for autophagy; the sequence is FKQLRDILDCEESK. In terms of domain architecture, B30.2/SPRY spans 280–494; it reads PDLKGMLQAF…LPMTLCSPSS (215 aa).

This sequence belongs to the TRIM/RBCC family. Can form homodimers and homotrimers. In addition to lower-order dimerization, also exhibits a higher-order multimerization and both low- and high-order multimerizations are essential for its restriction activity. Interacts with BTBD1 and BTBD2. Interacts with PSMC4, PSMC5, PSMD7 and HSPA8/HSC70. Interacts (via B30.2/SPRY domain) with HSPA1A/B. Interacts with PSMC2, MAP3K7/TAK1, TAB2 and TAB3. Interacts with SQSTM1. Interacts with TRIM6 and TRIM34. Interacts with ULK1 (phosphorylated form), GABARAP, GABARAPL1, GABARAPL2, MAP1LC3A, MAP1LC3C and BECN1. In terms of processing, degraded in a proteasome-independent fashion in the absence of viral infection but in a proteasome-dependent fashion following exposure to restriction sensitive virus. Post-translationally, autoubiquitinated in a RING finger- and UBE2D2-dependent manner. Monoubiquitinated by TRIM21. Deubiquitinated by Yersinia YopJ. Ubiquitination may not lead to proteasomal degradation.

It localises to the cytoplasm. Its subcellular location is the nucleus. The enzyme catalyses S-ubiquitinyl-[E2 ubiquitin-conjugating enzyme]-L-cysteine + [acceptor protein]-L-lysine = [E2 ubiquitin-conjugating enzyme]-L-cysteine + N(6)-ubiquitinyl-[acceptor protein]-L-lysine.. Its pathway is protein modification; protein ubiquitination. Functionally, capsid-specific restriction factor that prevents infection from non-host-adapted retroviruses. Blocks viral replication early in the life cycle, after viral entry but before reverse transcription. In addition to acting as a capsid-specific restriction factor, also acts as a pattern recognition receptor that activates innate immune signaling in response to the retroviral capsid lattice. Binding to the viral capsid triggers its E3 ubiquitin ligase activity, and in concert with the heterodimeric ubiquitin conjugating enzyme complex UBE2V1-UBE2N (also known as UBC13-UEV1A complex) generates 'Lys-63'-linked polyubiquitin chains, which in turn are catalysts in the autophosphorylation of the MAP3K7/TAK1 complex (includes TAK1, TAB2, and TAB3). Activation of the MAP3K7/TAK1 complex by autophosphorylation results in the induction and expression of NF-kappa-B and MAPK-responsive inflammatory genes, thereby leading to an innate immune response in the infected cell. Plays a role in regulating autophagy through activation of autophagy regulator BECN1 by causing its dissociation from its inhibitors BCL2 and TAB2. This is Tripartite motif-containing protein 5 (TRIM5) from Cebuella pygmaea (Pygmy marmoset).